We begin with the raw amino-acid sequence, 3146 residues long: Bassianolide nonribosomal cyclodepsipeptide synthetase (3146 aa).

The span at 1–12 (MEPPNNANTGQL) shows a compositional bias: polar residues. A disordered region spans residues 1-23 (MEPPNNANTGQLGPTLPNGTVDL). A condensation 1 region spans residues 69–454 (HVVYEIPEDV…INKLQSTDGS (386 aa)). Residues 495–887 (GDTPNKPAVC…GRMDSQVKIR (393 aa)) form an adenylation 1 region. The region spanning 1015–1091 (PDASAGVTKL…SLQAAIGGSS (77 aa)) is the Carrier 1 domain. S1052 is modified (O-(pantetheine 4'-phosphoryl)serine). The tract at residues 1109–1538 (SYSQGRLWFL…QTLISVVPLT (430 aa)) is condensation 2. The tract at residues 1567-1973 (FRTQVASYPD…GRMDFQFKIR (407 aa)) is adenylation 2. Positions 2041–2181 (TYTELDTVSS…FPTRDYLERV (141 aa)) are S-adenosyl-L-methionine-dependent N-methyltransferase (MT). 2 consecutive Carrier domains span residues 2514–2588 (FPLS…RQQL) and 2614–2688 (APTT…EVSQ). Residues S2548 and S2648 each carry the O-(pantetheine 4'-phosphoryl)serine modification. The interval 2734 to 3138 (QDVYLATHLQ…THLMEQVCNT (405 aa)) is condensation 3.

The protein belongs to the NRP synthetase family.

The catalysed reaction is 4 (R)-2-hydroxy-3-methylbutanoate + 4 L-leucine + 4 S-adenosyl-L-methionine + 8 ATP = bassianolide + 8 AMP + 4 S-adenosyl-L-homocysteine + 8 diphosphate + 8 H(+). Bassianolide nonribosomal synthetase that mediates the biosynthesis of bassianolide (BSL), a non-ribosomal cyclodepsipeptide that shows insecticidal and cancer cell antiproliferative activity. BSLS first catalyzes the iterative synthesis of an enzyme-bound dipeptidol monomer intermediate from D-2-hydroxyisovalerate and L-leucine before performing the condensation and cyclization of 4 dipeptidol monomers to yield the cyclic tetrameric ester bassianolide. The N-methyltransferase MT domain is responsible for the methylation of the leucine residues of bassianolide. BSLS is flexible with both the amino acid and hydroxyl acid precursors, and produces bassianolide as the major product (containing N-methyl-L-Leu), together with small amounts of beauvericin and its analogs beauvericins A-C (containing N-methyl-L-Phe). The protein is Bassianolide nonribosomal cyclodepsipeptide synthetase of Beauveria bassiana (White muscardine disease fungus).